The sequence spans 507 residues: ATP synthase subunit alpha, chloroplastic (507 aa).

Residue 170–177 (GDRQTGKT) coordinates ATP.

It belongs to the ATPase alpha/beta chains family. In terms of assembly, F-type ATPases have 2 components, CF(1) - the catalytic core - and CF(0) - the membrane proton channel. CF(1) has five subunits: alpha(3), beta(3), gamma(1), delta(1), epsilon(1). CF(0) has four main subunits: a, b, b' and c.

Its subcellular location is the plastid. The protein localises to the chloroplast thylakoid membrane. The enzyme catalyses ATP + H2O + 4 H(+)(in) = ADP + phosphate + 5 H(+)(out). In terms of biological role, produces ATP from ADP in the presence of a proton gradient across the membrane. The alpha chain is a regulatory subunit. This is ATP synthase subunit alpha, chloroplastic from Huperzia lucidula (Shining clubmoss).